Here is a 369-residue protein sequence, read N- to C-terminus: Succinyl-diaminopimelate desuccinylase (369 aa).

His77 contacts Zn(2+). Residue Asp79 is part of the active site. Asp103 lines the Zn(2+) pocket. Residue Glu136 is the Proton acceptor of the active site. Zn(2+)-binding residues include Glu137, Glu165, and His345.

Belongs to the peptidase M20A family. Zn(2+) is required as a cofactor. Requires Co(2+) as cofactor.

It carries out the reaction N-succinyl-(2S,6S)-2,6-diaminopimelate + H2O = (2S,6S)-2,6-diaminopimelate + succinate. Its pathway is amino-acid biosynthesis; L-lysine biosynthesis via DAP pathway; LL-2,6-diaminopimelate from (S)-tetrahydrodipicolinate (succinylase route): step 3/3. This is Succinyl-diaminopimelate desuccinylase (dapE) from Corynebacterium glutamicum (strain ATCC 13032 / DSM 20300 / JCM 1318 / BCRC 11384 / CCUG 27702 / LMG 3730 / NBRC 12168 / NCIMB 10025 / NRRL B-2784 / 534).